A 225-amino-acid chain; its full sequence is Suppressor of cytokine signaling 3 (225 aa).

Positions 22 to 33 (LKTFSSKSEYQL) are kinase inhibitory region (KIR). The segment at 34-45 (VVNAVRKLQESG) is extended SH2 subdomain (ESS). An SH2 domain is found at 46–142 (FYWSAVTGGE…APSFSLPPTE (97 aa)). Residues 141–160 (TEPSFEVQEQPPAQALPGGT) are disordered. Residues 177 to 224 (VLSRPLSSNVATLQHLCRKTVNGHLDSYEKVTQLPGPIREFLDQYDAP) form the SOCS box domain.

In terms of assembly, interacts with multiple activated proteins of the tyrosine kinase signaling pathway including IGF1 receptor, insulin receptor and JAK2. Binding to JAK2 is mediated through the KIR and SH2 domains to a phosphorylated tyrosine residue within the JAK2 JH1 domain. Binds specific activated tyrosine residues of the leptin, EPO, IL12, GSCF and gp130 receptors. Interaction with CSNK1E stabilize SOCS3 protein. Component of the probable ECS(SOCS3) E3 ubiquitin-protein ligase complex which contains CUL5, RNF7/RBX2, Elongin BC complex and SOCS3. Interacts with CUL5, RNF7, ELOB and ELOC. Interacts with FGFR3. Interacts with INSR. Interacts with BCL10; this interaction may interfere with BCL10-binding with PELI2. Interacts with NOD2 (via CARD domain); the interaction promotes NOD2 degradation. In terms of processing, phosphorylated on tyrosine residues after stimulation by the cytokines, IL-2, EPO or IGF1.

It functions in the pathway protein modification; protein ubiquitination. Its function is as follows. SOCS family proteins form part of a classical negative feedback system that regulates cytokine signal transduction. SOCS3 is involved in negative regulation of cytokines that signal through the JAK/STAT pathway. Inhibits cytokine signal transduction by binding to tyrosine kinase receptors including IL6ST/gp130, LIF, erythropoietin, insulin, IL12, GCSF and leptin receptors. Binding to JAK2 inhibits its kinase activity and regulates IL6 signaling. Suppresses fetal liver erythropoiesis. Regulates onset and maintenance of allergic responses mediated by T-helper type 2 cells. Probable substrate recognition component of a SCF-like ECS (Elongin BC-CUL2/5-SOCS-box protein) E3 ubiquitin-protein ligase complex which mediates the ubiquitination and subsequent proteasomal degradation of target proteins. The chain is Suppressor of cytokine signaling 3 from Rattus norvegicus (Rat).